We begin with the raw amino-acid sequence, 514 residues long: Glutamate--cysteine ligase, chloroplastic (514 aa).

A chloroplast-targeting transit peptide spans 1-55; it reads MALLSQAGGAYTVPSGHVSSRTGTKTVSGCVNVLRMKETYVSSYSRTLSTKSMLK. 2 disulfide bridges follow: Cys178–Cys398 and Cys341–Cys356.

Belongs to the carboxylate-amine ligase family. Glutamate--cysteine ligase type 2 subfamily. In terms of assembly, homodimer or monomer when oxidized or reduced, respectively. The Cys-178-Cys-398 disulfide bridge is known to modulate the enzyme activity according to the redox status. The oxidized form constitutes the active enzyme.

It is found in the plastid. The protein localises to the chloroplast. It catalyses the reaction L-cysteine + L-glutamate + ATP = gamma-L-glutamyl-L-cysteine + ADP + phosphate + H(+). It participates in sulfur metabolism; glutathione biosynthesis; glutathione from L-cysteine and L-glutamate: step 1/2. In terms of biological role, participates in the detoxification process. This chain is Glutamate--cysteine ligase, chloroplastic (GSH1), found in Brassica juncea (Indian mustard).